We begin with the raw amino-acid sequence, 362 residues long: Ribosome-binding ATPase YchF (362 aa).

In terms of domain architecture, OBG-type G spans 3–255; sequence FKCGIIGLPN…MNEDEQKYFM (253 aa). 12–17 is a binding site for ATP; the sequence is NVGKST. Mg(2+) contacts are provided by Ser16 and Thr36. Residues 277–360 form the TGS domain; the sequence is NLITFFTAGI…QDGDIINFLF (84 aa).

The protein belongs to the TRAFAC class OBG-HflX-like GTPase superfamily. OBG GTPase family. YchF/OLA1 subfamily. Requires Mg(2+) as cofactor.

Functionally, ATPase that binds to both the 70S ribosome and the 50S ribosomal subunit in a nucleotide-independent manner. The polypeptide is Ribosome-binding ATPase YchF (Buchnera aphidicola subsp. Schizaphis graminum (strain Sg)).